Reading from the N-terminus, the 953-residue chain is Coatomer subunit beta (953 aa).

Thr-2 carries the N-acetylthreonine modification. HEAT repeat units follow at residues 96–131 (HEMI…KEAE), 132–168 (LLEP…NFEH), 240–276 (SERA…SAPT), 277–314 (AIKA…HPAH), 316–353 (RVLQ…SRNV), and 396–433 (DMAA…RFDN). An N6-acetyllysine modification is found at Lys-494.

Oligomeric complex that consists of at least the alpha, beta, beta', gamma, delta, epsilon and zeta subunits. Interacts with SCYL1. Interacts with COPG1. Interacts (via trunk domain) with ARF1 (via switch I region); the interaction is direct. Interacts with KCNK2/TREK (via N-terminus); this interaction increases the channel-mediated whole cell currents and promotes plasma membrane expression of KCNK2/TREK. Interacts with anthrax lethal factor (LF); this interaction may facilitate endosomal vesicle membrane translocation of LF and its release from the lumen of endosomal vesicles to external milieu. Interacts with CAPN8 and PRKCE. Interacts with ARF1 (myristoylated); this interaction is required for binding of COPB1 to Golgi membranes. Interacts with STX17. Interacts with TMEM115. Interacts with HLA-G-B2M complex; this interaction mediates the endoplasmic reticulum (ER) retrieval of HLA-E-B2M complexes that bind low affinity peptides. Interacts with TMEM41B. As to quaternary structure, (Microbial infection) Interacts (via C-terminus) with HIV-1 Nef; the interaction is direct. In terms of processing, proteolytically cleaved between Ser-528 and Ser-529 by CAPN8.

The protein localises to the cytoplasm. Its subcellular location is the golgi apparatus membrane. It localises to the cytoplasmic vesicle. It is found in the COPI-coated vesicle membrane. The protein resides in the cell membrane. The protein localises to the endoplasmic reticulum-Golgi intermediate compartment. In terms of biological role, the coatomer is a cytosolic protein complex that binds to dilysine motifs and reversibly associates with Golgi non-clathrin-coated vesicles, which further mediate biosynthetic protein transport from the ER, via the Golgi up to the trans Golgi network. Coatomer complex is required for budding from Golgi membranes, and is essential for the retrograde Golgi-to-ER transport of dilysine-tagged proteins. In mammals, the coatomer can only be recruited by membranes associated to ADP-ribosylation factors (ARFs), which are small GTP-binding proteins; the complex also influences the Golgi structural integrity, as well as the processing, activity, and endocytic recycling of LDL receptors. Plays a functional role in facilitating the transport of kappa-type opioid receptor mRNAs into axons and enhances translation of these proteins. Required for limiting lipid storage in lipid droplets. Involved in lipid homeostasis by regulating the presence of perilipin family members PLIN2 and PLIN3 at the lipid droplet surface and promoting the association of adipocyte surface triglyceride lipase (PNPLA2) with the lipid droplet to mediate lipolysis. Involved in the Golgi disassembly and reassembly processes during cell cycle. Involved in autophagy by playing a role in early endosome function. Plays a role in organellar compartmentalization of secretory compartments including endoplasmic reticulum (ER)-Golgi intermediate compartment (ERGIC), Golgi, trans-Golgi network (TGN) and recycling endosomes, and in biosynthetic transport of CAV1. Promotes degradation of Nef cellular targets CD4 and MHC class I antigens by facilitating their trafficking to degradative compartments. The protein is Coatomer subunit beta of Homo sapiens (Human).